A 210-amino-acid chain; its full sequence is MSKLKIDTKRRFSLLIALVLIISLSSCATTQTNVTAITTKTVFNQETTYHNLLKLKKWQANGFIGIIYDNQAESANYTYLQDGDNFSIKLYGPLGIGSIEIKGDTNSVSLANSKGQKLTAKDAKTLMLEQLGWYVPVEGLKYWIKAIAIPNIRQTSELNTNNLLSKLSQNGWSISYSNYQLVDSKYPLPTKIRMSRDNLTLKIVIKSWQI.

The N-terminal stretch at methionine 1 to serine 26 is a signal peptide. The N-palmitoyl cysteine moiety is linked to residue cysteine 27. The S-diacylglycerol cysteine moiety is linked to residue cysteine 27.

The protein belongs to the LolB family. In terms of assembly, monomer.

Its subcellular location is the cell outer membrane. Plays a critical role in the incorporation of lipoproteins in the outer membrane after they are released by the LolA protein. In Francisella tularensis subsp. holarctica (strain FTNF002-00 / FTA), this protein is Outer-membrane lipoprotein LolB.